The following is an 803-amino-acid chain: Cation channel sperm-associated auxiliary subunit delta (803 aa).

The N-terminal stretch at 1 to 15 (MLMLMLAAVATVVRA) is a signal peptide. Over 16–720 (QTVCRFRTVR…ALPVAEFRPM (705 aa)) the chain is Extracellular. Disulfide bonds link Cys19/Cys365, Cys55/Cys142, Cys141/Cys148, Cys383/Cys492, Cys506/Cys698, Cys521/Cys568, and Cys620/Cys648. N-linked (GlcNAc...) asparagine glycans are attached at residues Asn226, Asn418, Asn436, Asn468, Asn534, Asn545, and Asn626. Residues 721-742 (TSILLMVTVTLFTMWLAYAIPK) traverse the membrane as a helical segment. The Cytoplasmic portion of the chain corresponds to 743–803 (QLRTERGRRL…QIGKKPDIKK (61 aa)). The disordered stretch occupies residues 782–803 (SRRVKDQPEKIPQIGKKPDIKK).

The protein belongs to the CATSPERD family. Component of the CatSper complex or CatSpermasome composed of the core pore-forming members CATSPER1, CATSPER2, CATSPER3 and CATSPER4 as well as auxiliary members CATSPERB, CATSPERG, CATSPERD, CATSPERE, CATSPERZ, C2CD6/CATSPERT, SLCO6C1, TMEM249, TMEM262 and EFCAB9. HSPA1 may be an additional auxiliary complex member. The core complex members CATSPER1, CATSPER2, CATSPER3 and CATSPER4 form a heterotetrameric channel. The auxiliary CATSPERB, CATSPERG, CATSPERD and CATSPERE subunits form a pavilion-like structure over the pore which stabilizes the complex through interactions with CATSPER4, CATSPER3, CATSPER1 and CATSPER2 respectively. SLCO6C1 interacts with CATSPERE and TMEM262/CATSPERH interacts with CATSPERB, further stabilizing the complex. C2CD6/CATSPERT interacts at least with CATSPERD and is required for targeting the CatSper complex in the flagellar membrane.

The protein resides in the cell projection. It localises to the cilium. It is found in the flagellum membrane. Functionally, auxiliary component of the CatSper complex, a complex involved in sperm cell hyperactivation. Sperm cell hyperactivation is needed for sperm motility which is essential late in the preparation of sperm for fertilization. Required for CATSPER1 stability before intraflagellar transport and/or incorporation of the CatSper complex channel into the flagellar membrane. This chain is Cation channel sperm-associated auxiliary subunit delta, found in Rattus norvegicus (Rat).